A 306-amino-acid polypeptide reads, in one-letter code: MSNEFITFEKISRKSWKQLHQKSKPLLTQEELTSITSLNDNIDINDVIEVYLPLIHLIQIYKIAQENLSFSKSLFLKKDIQQRPFIIGISGSVAVGKSTTSRLLQLLLARTHKTSTVELVTTDGFLYPNSTLIKNNMLNRKGFPESYNMELLLNFLDTVKGGQTASAPVYSHEIYDIVPDQQQTFTNPDFLIIEGINVFQNQQNNRLYMSDYFDFSIYIDADSHHIEQWYLERFLSLLELAKHDPANYYTRYTSLPQNEAIAFAKKVWKTINLENLEKFIEPTRNRAELILHKAADHKIDEIYLKK.

91–98 (GSVAVGKS) is a binding site for ATP.

It belongs to the prokaryotic pantothenate kinase family.

Its subcellular location is the cytoplasm. The catalysed reaction is (R)-pantothenate + ATP = (R)-4'-phosphopantothenate + ADP + H(+). It functions in the pathway cofactor biosynthesis; coenzyme A biosynthesis; CoA from (R)-pantothenate: step 1/5. This is Pantothenate kinase from Streptococcus equi subsp. zooepidemicus (strain MGCS10565).